The primary structure comprises 224 residues: Ribonuclease T (224 aa).

Positions 1–11 are enriched in acidic residues; sequence MSEDLYEDDQD. The interval 1–20 is disordered; that stretch reads MSEDLYEDDQDSQVSSGSRH. The Exonuclease domain maps to 32-206; sequence VVVDVETGGF…YDTEKTAELF (175 aa). Mg(2+)-binding residues include Asp-35, Glu-37, His-193, and Asp-198. The active-site Proton donor/acceptor is His-193.

The protein belongs to the RNase T family. As to quaternary structure, homodimer. Mg(2+) serves as cofactor.

In terms of biological role, trims short 3' overhangs of a variety of RNA species, leaving a one or two nucleotide 3' overhang. Responsible for the end-turnover of tRNA: specifically removes the terminal AMP residue from uncharged tRNA (tRNA-C-C-A). Also appears to be involved in tRNA biosynthesis. The sequence is that of Ribonuclease T from Pseudomonas entomophila (strain L48).